The primary structure comprises 198 residues: Putative nitroreductase MJ1384 (198 aa).

The protein belongs to the nitroreductase family. It depends on FMN as a cofactor.

This chain is Putative nitroreductase MJ1384, found in Methanocaldococcus jannaschii (strain ATCC 43067 / DSM 2661 / JAL-1 / JCM 10045 / NBRC 100440) (Methanococcus jannaschii).